Reading from the N-terminus, the 338-residue chain is S-adenosylmethionine:tRNA ribosyltransferase-isomerase (338 aa).

Belongs to the QueA family. Monomer.

The protein resides in the cytoplasm. The enzyme catalyses 7-aminomethyl-7-carbaguanosine(34) in tRNA + S-adenosyl-L-methionine = epoxyqueuosine(34) in tRNA + adenine + L-methionine + 2 H(+). Its pathway is tRNA modification; tRNA-queuosine biosynthesis. In terms of biological role, transfers and isomerizes the ribose moiety from AdoMet to the 7-aminomethyl group of 7-deazaguanine (preQ1-tRNA) to give epoxyqueuosine (oQ-tRNA). The polypeptide is S-adenosylmethionine:tRNA ribosyltransferase-isomerase (Francisella tularensis subsp. mediasiatica (strain FSC147)).